We begin with the raw amino-acid sequence, 138 residues long: Putative pre-16S rRNA nuclease (138 aa).

Belongs to the YqgF nuclease family.

It is found in the cytoplasm. Could be a nuclease involved in processing of the 5'-end of pre-16S rRNA. The polypeptide is Putative pre-16S rRNA nuclease (Haemophilus ducreyi (strain 35000HP / ATCC 700724)).